A 403-amino-acid chain; its full sequence is Odorant receptor 43b (403 aa).

Residues 1–49 (MFGHFKLVYPAPISEPIQSRDSNAYMMETLRNSGLNLKNDFGIGRKIWR) lie on the Cytoplasmic side of the membrane. A helical transmembrane segment spans residues 50–70 (VFSFTYNMVILPVSFPINYVI). Over 71-83 (HLAEFPPELLLQS) the chain is Extracellular. The helical transmembrane segment at 84–104 (LQLCLNTWCFALKFFTLIVYT) threads the bilayer. Topologically, residues 105–139 (HRLELANKHFDELDKYCVKPAEKRKVRDMVATITR) are cytoplasmic. Residues 140–160 (LYLTFVVVYVLYATSTLLDGL) form a helical membrane-spanning segment. The Extracellular segment spans residues 161–193 (LHHRVPYNTYYPFINWRVDRTQMYIQSFLEYFT). Residues 194–214 (VGYAIYVATATDSYPVIYVAA) traverse the membrane as a helical segment. The Cytoplasmic portion of the chain corresponds to 215-271 (LRTHILLLKDRIIYLGDPSNEGSSDPSYMFKSLVDCIKAHRTMLNFCDAIQPIISGT). The helical transmembrane segment at 272–292 (IFAQFIICGSILGIIMINMVL) threads the bilayer. The Extracellular segment spans residues 293 to 299 (FADQSTR). The helical transmembrane segment at 300 to 320 (FGIVIYVMAVLLQTFPLCFYC) threads the bilayer. The Cytoplasmic portion of the chain corresponds to 321-372 (NAIVDDCKELAHALFHSAWWVQDKRYQRTVIQFLQKLQQPMTFTAMNIFNIN). Residues 373–393 (LATNINVAKFAFTVYAIASGM) form a helical membrane-spanning segment. Residues 394–403 (NLDQKLSIKE) are Extracellular-facing.

It belongs to the insect chemoreceptor superfamily. Heteromeric odorant receptor channel (TC 1.A.69) family. Or2a subfamily. As to quaternary structure, interacts with Orco. Complexes exist early in the endomembrane system in olfactory sensory neurons (OSNs), coupling these complexes to the conserved ciliary trafficking pathway. Expressed in 16 olfactory receptor neurons in a broad area across the antenna, including both anterior and posterior faces and in the maxillary palp. This expression pattern matches the distribution of the small sensilla basiconica. Expression in the antenna is observed late in antennal development at 93 hours APF.

It localises to the cell membrane. Its function is as follows. Odorant receptor which mediates acceptance or avoidance behavior, depending on its substrates. The odorant receptor repertoire encodes a large collection of odor stimuli that vary widely in identity, intensity, and duration. May form a complex with Orco to form odorant-sensing units, providing sensitive and prolonged odorant signaling and calcium permeability. The polypeptide is Odorant receptor 43b (Or43b) (Drosophila melanogaster (Fruit fly)).